Consider the following 295-residue polypeptide: Nucleotide-binding protein BH3569 (295 aa).

14 to 21 lines the ATP pocket; sequence GMSGAGKT. Position 65–68 (65–68) interacts with GTP; that stretch reads DLRG.

Belongs to the RapZ-like family.

Its function is as follows. Displays ATPase and GTPase activities. The chain is Nucleotide-binding protein BH3569 from Halalkalibacterium halodurans (strain ATCC BAA-125 / DSM 18197 / FERM 7344 / JCM 9153 / C-125) (Bacillus halodurans).